Consider the following 386-residue polypeptide: MSVIKMTDLDLAGKRVFIRADLNVPVKDGKVTSDARIIASLPTIKHCLEAGAKVMVTSHLGRPTEGEYAEEFSLQPVVNYLNDALDCEVKLAKDYLNGLELNAGELVVLENVRFNKGEKKNEEELSKQYASLCDIFVMDAFGTAHRAQASTHGVGMHADVACAGPLLANELEALGKAMDKPARPMVAIVGGSKVSTKLTVLESLSKIADQLVVGGGIANTFIAAAGHNVGKSLYEADLVETAKKLMDECAIPVATDVACAKAFDENAEAEIKHVSEVQDDDMIFDLGPDSTAELAEILKNAKTILWNGPVGVFEFKNFEAGTKGISEAIAASEGFSVAGGGDTLAAIDKFGIKADVSYISTGGGAFLEFVEGKVLPAVEMLEARAK.

Residues 21–23 (DLN), Arg-36, 59–62 (HLGR), Arg-113, and Arg-146 each bind substrate. ATP is bound by residues Lys-197, Glu-314, and 340 to 343 (GGDT).

This sequence belongs to the phosphoglycerate kinase family. In terms of assembly, monomer.

The protein resides in the cytoplasm. The catalysed reaction is (2R)-3-phosphoglycerate + ATP = (2R)-3-phospho-glyceroyl phosphate + ADP. It functions in the pathway carbohydrate degradation; glycolysis; pyruvate from D-glyceraldehyde 3-phosphate: step 2/5. In Vibrio campbellii (strain ATCC BAA-1116), this protein is Phosphoglycerate kinase.